The sequence spans 957 residues: Valine--tRNA ligase (957 aa).

Positions P47 to H57 match the 'HIGH' region motif. The 'KMSKS' region motif lies at K558–S562. K561 contributes to the ATP binding site. Residues F889–D918 adopt a coiled-coil conformation.

It belongs to the class-I aminoacyl-tRNA synthetase family. ValS type 1 subfamily. As to quaternary structure, monomer.

It localises to the cytoplasm. It carries out the reaction tRNA(Val) + L-valine + ATP = L-valyl-tRNA(Val) + AMP + diphosphate. Its function is as follows. Catalyzes the attachment of valine to tRNA(Val). As ValRS can inadvertently accommodate and process structurally similar amino acids such as threonine, to avoid such errors, it has a 'posttransfer' editing activity that hydrolyzes mischarged Thr-tRNA(Val) in a tRNA-dependent manner. This is Valine--tRNA ligase from Blochmanniella pennsylvanica (strain BPEN).